A 113-amino-acid chain; its full sequence is Cell cycle protein GpsB (113 aa).

Positions 32–71 (LDNVIKDYESFTKDNQQLSDENERLRAKVDELTKQVAVGA) form a coiled coil.

The protein belongs to the GpsB family. Forms polymers through the coiled coil domains. Interacts with PBP1, MreC and EzrA.

Its subcellular location is the cytoplasm. Functionally, divisome component that associates with the complex late in its assembly, after the Z-ring is formed, and is dependent on DivIC and PBP2B for its recruitment to the divisome. Together with EzrA, is a key component of the system that regulates PBP1 localization during cell cycle progression. Its main role could be the removal of PBP1 from the cell pole after pole maturation is completed. Also contributes to the recruitment of PBP1 to the division complex. Not essential for septum formation. This Lactiplantibacillus plantarum (strain ATCC BAA-793 / NCIMB 8826 / WCFS1) (Lactobacillus plantarum) protein is Cell cycle protein GpsB.